Here is a 253-residue protein sequence, read N- to C-terminus: UPF0280 protein Mbar_A3697 (253 aa).

The protein belongs to the UPF0280 family.

The polypeptide is UPF0280 protein Mbar_A3697 (Methanosarcina barkeri (strain Fusaro / DSM 804)).